Reading from the N-terminus, the 120-residue chain is Aspartate 1-decarboxylase (120 aa).

Serine 25 serves as the catalytic Schiff-base intermediate with substrate; via pyruvic acid. Position 25 is a pyruvic acid (Ser) (serine 25). Residue threonine 57 participates in substrate binding. The active-site Proton donor is tyrosine 58. 73–75 (GAA) lines the substrate pocket.

The protein belongs to the PanD family. As to quaternary structure, heterooctamer of four alpha and four beta subunits. Pyruvate serves as cofactor. Is synthesized initially as an inactive proenzyme, which is activated by self-cleavage at a specific serine bond to produce a beta-subunit with a hydroxyl group at its C-terminus and an alpha-subunit with a pyruvoyl group at its N-terminus.

It is found in the cytoplasm. The enzyme catalyses L-aspartate + H(+) = beta-alanine + CO2. The protein operates within cofactor biosynthesis; (R)-pantothenate biosynthesis; beta-alanine from L-aspartate: step 1/1. Its function is as follows. Catalyzes the pyruvoyl-dependent decarboxylation of aspartate to produce beta-alanine. In Cupriavidus taiwanensis (strain DSM 17343 / BCRC 17206 / CCUG 44338 / CIP 107171 / LMG 19424 / R1) (Ralstonia taiwanensis (strain LMG 19424)), this protein is Aspartate 1-decarboxylase.